The chain runs to 351 residues: uncharacterized protein (351 aa).

Belongs to the glycosyltransferase group 1 family. Glycosyltransferase 4 subfamily.

This is an uncharacterized protein from Methanocaldococcus jannaschii (strain ATCC 43067 / DSM 2661 / JAL-1 / JCM 10045 / NBRC 100440) (Methanococcus jannaschii).